The chain runs to 440 residues: NADH-quinone oxidoreductase subunit D 1 (440 aa).

It belongs to the complex I 49 kDa subunit family. In terms of assembly, NDH-1 is composed of 14 different subunits. Subunits NuoB, C, D, E, F, and G constitute the peripheral sector of the complex.

The protein resides in the cell membrane. The enzyme catalyses a quinone + NADH + 5 H(+)(in) = a quinol + NAD(+) + 4 H(+)(out). NDH-1 shuttles electrons from NADH, via FMN and iron-sulfur (Fe-S) centers, to quinones in the respiratory chain. The immediate electron acceptor for the enzyme in this species is believed to be a menaquinone. Couples the redox reaction to proton translocation (for every two electrons transferred, four hydrogen ions are translocated across the cytoplasmic membrane), and thus conserves the redox energy in a proton gradient. This is NADH-quinone oxidoreductase subunit D 1 from Streptomyces griseus subsp. griseus (strain JCM 4626 / CBS 651.72 / NBRC 13350 / KCC S-0626 / ISP 5235).